Here is an 845-residue protein sequence, read N- to C-terminus: MSASATRSRNKQSKLRDDERLDISKDEFNRIQEAFGQEEFRKLFFDYVEEIQDPENRKIYEEEITQLEKERGVEVRFIHPKPGFVIKTALDGELKCFINIAGSEEIERPKNEVATDPSSGNRGLSWSIPMAQTSSRDDCDAKNNHCKVFDVVFHPDALHLAKRNKQFRQCLIDTALDAVEREYKVSLDRANLKFPKLDYKGIPRPTVIRKLADNPTAEEQEPHPLAHMFPTQPPAPGKPEPRVLPLKTKPTPVPEFTVPRYSIKHSHDVDLSEYTDELDAKLHVTVPRALVVEIELPLLRSTAECQLDVTSKSVYLFSERQGAKYRLKLDLPFTVDDKAGQARFDTDLRRLSITLPVVRKSSKEQAQMHETLRHFSREDSGVELHSNSESPVEEDPDGELSDSKADISDISSPTAAPVRHSNSPFLKSSVHYQLPSKFDCNVLDNVMAFVLHVPNVQPDSIEQLREQRSLHLQFATIGSGYYPTHYAFYVELPAEHEDSAIESVEAEAWDNNVVLKLCLTSQSETPASYLAGLDATELKEYPVHGQYNVKSKEKVIARKENAPFEIKFEHNQEGQALKVSIRPGTKEEEKENQDQEPEIDQQHQQQVQNKKPGKKQRKRNKKERSLSESACADMILQEPLTKNSELQPKSTFNLPQRKQRSYSECNDSTGGSHRGILKRFSRYGPRPSMSDSCSSIDDCSSYSCSVDASGTSLFSHSFGGIPEEDRSDAGLSESCKKTVRFNDHIMKQVFRLDSSILGQRKKNQKRRDLKLRAQHRRLSEGDSVDYEESRGSALKQQENQSRNCNKPKGVSVLHDSGLDLTGAPGAHSNNNESEAKNAMMFEMDD.

Residues 362-382 (SKEQAQMHETLRHFSREDSGV) show a composition bias toward basic and acidic residues. Disordered stretches follow at residues 362–420 (SKEQ…PVRH), 575–691 (QALK…SMSD), and 773–845 (AQHR…EMDD). S380 is subject to Phosphoserine. Over residues 391–400 (PVEEDPDGEL) the composition is skewed to acidic residues. A compositionally biased stretch (basic and acidic residues) spans 584 to 593 (GTKEEEKENQ). Positions 611–622 (KPGKKQRKRNKK) are enriched in basic residues. Over residues 640 to 671 (LTKNSELQPKSTFNLPQRKQRSYSECNDSTGG) the composition is skewed to polar residues. S779 carries the post-translational modification Phosphoserine. Residues 794 to 804 (LKQQENQSRNC) are compositionally biased toward polar residues.

This sequence belongs to the PIH1 family. Kintoun subfamily. In terms of assembly, interacts with Pp1alpha-96A, Pp1-87B, Pp1-13C and flw.

It localises to the cytoplasm. Its function is as follows. Required for cytoplasmic pre-assembly of axonemal dyneins, thereby playing a central role in motility in cilia and flagella. Involved in pre-assembly of dynein arm complexes in the cytoplasm before intraflagellar transport loads them for the ciliary compartment. The protein is Protein kintoun of Drosophila erecta (Fruit fly).